Here is a 194-residue protein sequence, read N- to C-terminus: Small ribosomal subunit protein uS4c (194 aa).

The 62-residue stretch at 82 to 143 (MRLDNILFRL…KERSKVLIQN (62 aa)) folds into the S4 RNA-binding domain.

The protein belongs to the universal ribosomal protein uS4 family. Part of the 30S ribosomal subunit. Contacts protein S5. The interaction surface between S4 and S5 is involved in control of translational fidelity.

The protein localises to the plastid. Its subcellular location is the chloroplast. One of the primary rRNA binding proteins, it binds directly to 16S rRNA where it nucleates assembly of the body of the 30S subunit. Its function is as follows. With S5 and S12 plays an important role in translational accuracy. The polypeptide is Small ribosomal subunit protein uS4c (rps4) (Trimezia steyermarkii (Steyermark's trimezia)).